The sequence spans 228 residues: Cytochrome P450 monooxygenase ataY (228 aa).

Residue C216 coordinates heme.

This sequence belongs to the cytochrome P450 family. It depends on heme as a cofactor.

Its pathway is mycotoxin biosynthesis. Cytochrome P450 monooxygenase; part of the gene cluster that mediates the biosynthesis of acetylaranotin, a member of the epipolythiodioxopiperazine (ETP) class of toxins characterized by a disulfide-bridged cyclic dipeptide. The first step of acetylaranotin biosynthesis is performed by the NRPS ataP which produces diketopiperazine cyclo-L-Phe-L-Phe via the condensation of 2 phenylalanines (L-Phe). The ataC domain of ataTC then catalyzes the formation of bishydroxylation of cyclo-L-Phe-L-Phe. The glutathione S-transferase domain ataG in ataIMG further catalyzes the conjugation of two glutathiones to the bishydroxylated intermediate. Next, the dipeptidase ataJ removes the Glu residues. The following step is performed by the carbon sulfur lyase domain ataI of ataIMG which may convert the bis-cysteinyl adduct to yield an epidithiol intermediate. The ataT domain from ataTC then catalyzes the oxidation of the free dithiols, followed by a cyclization step catalyzed by the cytochrome P450 ataF. AtaF probably acts as an epoxidase to promote a dual epoxidation formation at C8 and C9 along with C8' and C9', followed by the spontaneous nucleophilic attack of the amide nitrogens N10 and N10' to yield an intermediate with the pyrrolidine partial structure. The final steps of acetylaranotin biosynthesis involve the acetylation and ring rearrangement of an epitetrathiodiketopiperazine intermediate to produce acetylaranotin. AtaH probably catalyzes the acetylation of epitetrathiodiketopiperazine to produce a diacetate and ataY is responsible for the formation of the dihydrooxepin moiety that converts the diacetate intermediate to acetylaranotin via acetylapoaranotin. Both enzymes could function independently in the absence of the other. The acetylaranotin bis-thiomethyltransferase ataS located outside of acetylaranotin gene cluster is the main thiomethyltransferase responsible for converting acetylaranotin and its related intermediates to their methylated forms. This chain is Cytochrome P450 monooxygenase ataY, found in Aspergillus terreus (strain NIH 2624 / FGSC A1156).